We begin with the raw amino-acid sequence, 75 residues long: DNA-directed RNA polymerase subunit omega (75 aa).

It belongs to the RNA polymerase subunit omega family. In cyanobacteria the RNAP catalytic core is composed of 2 alpha, 1 beta, 1 beta', 1 gamma and 1 omega subunit. When a sigma factor is associated with the core the holoenzyme is formed, which can initiate transcription.

It carries out the reaction RNA(n) + a ribonucleoside 5'-triphosphate = RNA(n+1) + diphosphate. In terms of biological role, promotes RNA polymerase assembly. Latches the N- and C-terminal regions of the beta' subunit thereby facilitating its interaction with the beta and alpha subunits. The sequence is that of DNA-directed RNA polymerase subunit omega from Synechococcus sp. (strain WH7803).